The sequence spans 201 residues: Peptide deformylase (201 aa).

The segment at 1–21 (MANHFSQLAKKSRTNGNAEKI) is disordered. Residues C121 and H163 each coordinate Fe cation. E164 is an active-site residue. H167 contributes to the Fe cation binding site.

This sequence belongs to the polypeptide deformylase family. Requires Fe(2+) as cofactor.

The enzyme catalyses N-terminal N-formyl-L-methionyl-[peptide] + H2O = N-terminal L-methionyl-[peptide] + formate. Its function is as follows. Removes the formyl group from the N-terminal Met of newly synthesized proteins. Requires at least a dipeptide for an efficient rate of reaction. N-terminal L-methionine is a prerequisite for activity but the enzyme has broad specificity at other positions. The chain is Peptide deformylase from Prochlorococcus marinus (strain AS9601).